The primary structure comprises 86 residues: Precursor of CEP4 (86 aa).

The first 30 residues, 1 to 30 (MVSRGCSITVLFRFLIVLLVIQVHFENTKA), serve as a signal peptide directing secretion. Residues 31-64 (ARHAPVVSWSPPEPPKDDFVWYHKINRFKNIEQD) constitute a propeptide that is removed on maturation. Residues 63 to 86 (QDAFRPTHQGPSQGIGHKNPPGAP) are disordered. A hydroxyproline mark is found at proline 68 and proline 73. Residues 80-86 (KNPPGAP) constitute a propeptide that is removed on maturation.

The protein belongs to the C-terminally encoded plant signaling peptide (CEP) family. As to quaternary structure, interacts with CEP receptors (e.g. CEPR1 and CEPR2). In terms of processing, the mature small signaling peptide is generated by proteolytic processing of the longer precursor. As to expression, expressed at low levels in flowers. Present in lateral roots, shoot apical meristem (SAM), flowers and siliques.

It is found in the secreted. The protein resides in the extracellular space. The protein localises to the apoplast. In terms of biological role, extracellular signaling peptide that represses primary root growth rate. Promotes shoot growth and modulates leaf morphology. Regulates systemic nitrogen (N)-demand signaling. Mediates up-regulation of genes involved in N uptake and assimilation pathways. This is Precursor of CEP4 from Arabidopsis thaliana (Mouse-ear cress).